The primary structure comprises 152 residues: Flagellar assembly factor FliW (152 aa).

The protein belongs to the FliW family. Interacts with translational regulator CsrA and flagellin(s).

It is found in the cytoplasm. In terms of biological role, acts as an anti-CsrA protein, binds CsrA and prevents it from repressing translation of its target genes, one of which is flagellin. Binds to flagellin and participates in the assembly of the flagellum. This Desulfitobacterium hafniense (strain Y51) protein is Flagellar assembly factor FliW.